A 315-amino-acid polypeptide reads, in one-letter code: Methionyl-tRNA formyltransferase (315 aa).

Position 113–116 (113–116 (SLLP)) interacts with (6S)-5,6,7,8-tetrahydrofolate.

This sequence belongs to the Fmt family.

It carries out the reaction L-methionyl-tRNA(fMet) + (6R)-10-formyltetrahydrofolate = N-formyl-L-methionyl-tRNA(fMet) + (6S)-5,6,7,8-tetrahydrofolate + H(+). Attaches a formyl group to the free amino group of methionyl-tRNA(fMet). The formyl group appears to play a dual role in the initiator identity of N-formylmethionyl-tRNA by promoting its recognition by IF2 and preventing the misappropriation of this tRNA by the elongation apparatus. The sequence is that of Methionyl-tRNA formyltransferase from Escherichia coli O139:H28 (strain E24377A / ETEC).